We begin with the raw amino-acid sequence, 988 residues long: DNA-binding protein SMUBP-2 (988 aa).

Ala2 carries the post-translational modification N-acetylalanine. Residues Gly213–Thr220, Gln402, Tyr441, and Glu570 each bind ATP. The tract at residues Thr637 to Arg783 is SS DNA-binding. 3 disordered regions span residues Thr651–Asp722, Leu765–Ser820, and Arg835–Ser872. A compositionally biased stretch (polar residues) spans Ser702 to Thr718. Positions Thr721–Ser784 constitute an R3H domain. Positions Leu765 to Ala775 are enriched in basic and acidic residues. Phosphoserine occurs at positions 797 and 800. Residues Ala802–Pro817 are compositionally biased toward low complexity. Polar residues predominate over residues Arg835–Gln844. The short motif at Lys857–Lys861 is the Nuclear localization signal element. The AN1-type zinc-finger motif lies at Val884–Ala933. Cys890, Cys895, Cys906, Cys909, Cys914, His917, His923, and Cys925 together coordinate Zn(2+). Positions Leu943–Thr988 are disordered. Over residues Thr949–Gly971 the composition is skewed to basic and acidic residues. Positions Ala957–Arg986 form a coiled coil.

The protein belongs to the DNA2/NAM7 helicase family. Homooligomer. Interacts with RUVBL1. Interacts with RUVBL2. Interacts with GTF3C1. Interacts with ABT1. Interacts with ribosomes. As to expression, expressed in liver, skin, muscle, heart, brain, spleen and kidney.

The protein resides in the nucleus. It is found in the cytoplasm. Its subcellular location is the cell projection. It localises to the axon. The enzyme catalyses ATP + H2O = ADP + phosphate + H(+). Its function is as follows. 5' to 3' helicase that unwinds RNA and DNA duplexes in an ATP-dependent reaction. Specific to 5'-phosphorylated single-stranded guanine-rich sequences. May play a role in RNA metabolism, ribosome biogenesis or initiation of translation. May play a role in regulation of transcription. Interacts with tRNA-Tyr. The sequence is that of DNA-binding protein SMUBP-2 (Ighmbp2) from Rattus norvegicus (Rat).